The following is a 698-amino-acid chain: Serine/threonine-protein kinase Nek8 (698 aa).

In terms of domain architecture, Protein kinase spans 4–258 (YERIRVVGRG…LSHIMAQPLC (255 aa)). ATP-binding positions include 10 to 18 (VGRGAFGIV) and Lys-33. Asp-128 functions as the Proton acceptor in the catalytic mechanism. Thr-162 carries the post-translational modification Phosphothreonine; by autocatalysis. The interval 278–309 (EKSLTPGPPIASGSTGSRATSARCRGVPRGPV) is disordered. Residues 288-309 (ASGSTGSRATSARCRGVPRGPV) show a composition bias toward low complexity. RCC1 repeat units follow at residues 416–467 (GIIM…LSTD), 468–519 (GELF…LTSP), 520–585 (GRVL…ITAS), 586–637 (GDCY…VGAE), and 638–690 (GEVY…AVRS).

Belongs to the protein kinase superfamily. NEK Ser/Thr protein kinase family. NIMA subfamily. Interacts with PKD2; may regulate PKD2 targeting to the cilium. Interacts with ANKS6. Component of a complex containing at least ANKS6, INVS, NEK8 and NPHP3. ANKS6 may organize complex assembly by linking INVS and NPHP3 to NEK8 and INVS may target the complex to the proximal ciliary axoneme. Interacts with ANKS3. The cofactor is Mg(2+). As to expression, kidney, liver, and testis.

It is found in the cytoplasm. The protein localises to the cytoskeleton. Its subcellular location is the cell projection. The protein resides in the cilium. It localises to the microtubule organizing center. It is found in the centrosome. The protein localises to the cilium axoneme. The enzyme catalyses L-seryl-[protein] + ATP = O-phospho-L-seryl-[protein] + ADP + H(+). It catalyses the reaction L-threonyl-[protein] + ATP = O-phospho-L-threonyl-[protein] + ADP + H(+). Its function is as follows. Required for renal tubular integrity. May regulate local cytoskeletal structure in kidney tubule epithelial cells. May regulate ciliary biogenesis through targeting of proteins to the cilia. Plays a role in organogenesis and is involved in the regulation of the Hippo signaling pathway. The protein is Serine/threonine-protein kinase Nek8 (Nek8) of Mus musculus (Mouse).